Here is a 463-residue protein sequence, read N- to C-terminus: SPARC-related modular calcium-binding protein 1 (463 aa).

An N-terminal signal peptide occupies residues 1–25; the sequence is MLPARVRLLTPHLLLVLVQLSPAGG. A Kazal-like domain is found at 36–88; that stretch reads SDRDPPCNPHCPRTQPKPICASDGRSYESMCEYQRAKCRDPALAVVHRGRCKD. Cystine bridges form between cysteine 42–cysteine 73, cysteine 46–cysteine 66, cysteine 55–cysteine 86, cysteine 94–cysteine 117, cysteine 128–cysteine 135, and cysteine 137–cysteine 157. One can recognise a Thyroglobulin type-1 1 domain in the interval 91 to 157; it reads QSKCRLERAQ…SSVQNKTPVC (67 aa). A glycan (N-linked (GlcNAc...) asparagine) is linked at asparagine 224. The Thyroglobulin type-1 2 domain maps to 234 to 302; sequence VHSCDQERQS…TSTRYVMPSC (69 aa). 3 cysteine pairs are disulfide-bonded: cysteine 237–cysteine 261, cysteine 272–cysteine 279, and cysteine 281–cysteine 302. EF-hand domains are found at residues 369 to 404 and 406 to 441; these read LEERVAHWYFSQLDSNSSDDINKREMKPFKRYVKKK and KPKKCARRFTDYCDLNKDKVISLPELKGCLGVSKEG. The Ca(2+) site is built by aspartate 382, asparagine 384, serine 386, aspartate 388, glutamate 393, aspartate 419, asparagine 421, aspartate 423, and glutamate 430. N-linked (GlcNAc...) asparagine glycosylation is present at asparagine 384.

Post-translationally, glycosylated. Widely expressed in many tissues with a strongest signal in ovary.

It is found in the secreted. Its subcellular location is the extracellular space. It localises to the extracellular matrix. The protein localises to the basement membrane. In terms of biological role, probable regulator of osteoblast differentiation. Plays essential roles in both eye and limb development. This chain is SPARC-related modular calcium-binding protein 1 (Smoc1), found in Mus musculus (Mouse).